Consider the following 108-residue polypeptide: Nucleoid-associated protein Bpet3552 (108 aa).

It belongs to the YbaB/EbfC family. As to quaternary structure, homodimer.

The protein resides in the cytoplasm. Its subcellular location is the nucleoid. Functionally, binds to DNA and alters its conformation. May be involved in regulation of gene expression, nucleoid organization and DNA protection. In Bordetella petrii (strain ATCC BAA-461 / DSM 12804 / CCUG 43448), this protein is Nucleoid-associated protein Bpet3552.